A 46-amino-acid chain; its full sequence is Large ribosomal subunit protein bL33B (46 aa).

Belongs to the bacterial ribosomal protein bL33 family.

This is Large ribosomal subunit protein bL33B (rpmG2) from Mycoplasmopsis pulmonis (strain UAB CTIP) (Mycoplasma pulmonis).